The primary structure comprises 414 residues: Transcription factor FAMA (414 aa).

Disordered stretches follow at residues Met1–Asp61 and Lys142–Met197. Composition is skewed to low complexity over residues Gly12–Gly24 and Gln35–Gln49. The segment covering Arg166–Glu175 has biased composition (basic and acidic residues). Basic residues predominate over residues Val176–Thr185. The span at Lys187–Met197 shows a compositional bias: basic and acidic residues. A bHLH domain is found at Ser194 to Leu245. The LxCxE motif motif lies at Leu249 to Glu253.

As to quaternary structure, interacts with FAMA through its LxCxE motif. Self-interacts. Also interacts with bHLH071 and bHLH093. Interacts with RBR1. As to expression, resctricted to stomatal cell lineages (at protein level). Expressed in roots, leaves, stems, and flowers.

Its subcellular location is the nucleus. Functionally, transcription activator. Together with MYB88 and MYB124, ensures that stomata contain just two guard cells (GCs) by enforcing a single symmetric precursor cell division before stomatal maturity. Together with SPCH and MUTE, regulates the stomata formation. Required to promote differentiation and morphogenesis of stomatal guard cells and to halt proliferative divisions in their immediate precursors. Mediates the formation of stomata. Prevents histone H3K27me3 marks and derepresses stem cell gene expression. This is Transcription factor FAMA (FAMA) from Arabidopsis thaliana (Mouse-ear cress).